The chain runs to 187 residues: Probable nicotinate-nucleotide adenylyltransferase (187 aa).

It belongs to the NadD family.

The catalysed reaction is nicotinate beta-D-ribonucleotide + ATP + H(+) = deamido-NAD(+) + diphosphate. It participates in cofactor biosynthesis; NAD(+) biosynthesis; deamido-NAD(+) from nicotinate D-ribonucleotide: step 1/1. Its function is as follows. Catalyzes the reversible adenylation of nicotinate mononucleotide (NaMN) to nicotinic acid adenine dinucleotide (NaAD). This is Probable nicotinate-nucleotide adenylyltransferase from Agrobacterium fabrum (strain C58 / ATCC 33970) (Agrobacterium tumefaciens (strain C58)).